Reading from the N-terminus, the 359-residue chain is Phosphate acyltransferase (359 aa).

The tract at residues 335-359 (SGAGGAATGSPETDAPNPHPDSRAA) is disordered.

Belongs to the PlsX family. In terms of assembly, homodimer. Probably interacts with PlsY.

It localises to the cytoplasm. The enzyme catalyses a fatty acyl-[ACP] + phosphate = an acyl phosphate + holo-[ACP]. It functions in the pathway lipid metabolism; phospholipid metabolism. Catalyzes the reversible formation of acyl-phosphate (acyl-PO(4)) from acyl-[acyl-carrier-protein] (acyl-ACP). This enzyme utilizes acyl-ACP as fatty acyl donor, but not acyl-CoA. The chain is Phosphate acyltransferase from Cupriavidus metallidurans (strain ATCC 43123 / DSM 2839 / NBRC 102507 / CH34) (Ralstonia metallidurans).